A 431-amino-acid chain; its full sequence is ORC1-type DNA replication protein 14 (431 aa).

ATP is bound by residues 62–66 (TGKSL), Tyr-219, and Arg-231.

The protein belongs to the CDC6/cdc18 family.

Its function is as follows. Involved in regulation of DNA replication. The chain is ORC1-type DNA replication protein 14 (cdc6n) from Haloarcula marismortui (strain ATCC 43049 / DSM 3752 / JCM 8966 / VKM B-1809) (Halobacterium marismortui).